The chain runs to 82 residues: Small ribosomal subunit protein bS16 (82 aa).

Belongs to the bacterial ribosomal protein bS16 family.

The chain is Small ribosomal subunit protein bS16 from Pseudoalteromonas translucida (strain TAC 125).